The chain runs to 165 residues: Keratin-associated protein 5-7 (165 aa).

Tandem repeats lie at residues 35-38 (CCVP), 41-44 (CCKP), 47-50 (CCVP), 116-119 (CCKP), 126-129 (CCKP), 145-148 (CCNP), and 155-158 (CCVP). Residues 35-158 (CCVPVCCCKP…CCSQSSCCVP (124 aa)) are 7 X 4 AA repeats of C-C-X-P.

This sequence belongs to the KRTAP type 5 family. As to quaternary structure, interacts with hair keratins. As to expression, expressed in hair root but not in skin.

In the hair cortex, hair keratin intermediate filaments are embedded in an interfilamentous matrix, consisting of hair keratin-associated protein (KRTAP), which are essential for the formation of a rigid and resistant hair shaft through their extensive disulfide bond cross-linking with abundant cysteine residues of hair keratins. The matrix proteins include the high-sulfur and high-glycine-tyrosine keratins. The chain is Keratin-associated protein 5-7 (KRTAP5-7) from Homo sapiens (Human).